The following is a 113-amino-acid chain: MFPYKIVEDVVILMPNKELNIENAHLFKKWVFDEFLNKGYNKILLVLSDVESIDSFSLGVIVNILKSVSSVGGFFALVSPNERVERVLSITNLDRIVKIYDTISEALEEVQGR.

The STAS domain maps to 1-110; sequence MFPYKIVEDV…DTISEALEEV (110 aa). Residue serine 55 is modified to Phosphoserine.

The protein belongs to the anti-sigma-factor antagonist family. Post-translationally, phosphorylated on a serine residue.

Functionally, in the phosphorylated form it could act as an anti-anti-sigma factor that counteracts an anti-sigma factor and thus releases a sigma factor from inhibition. The chain is Putative anti-sigma factor antagonist TM1081 homolog from Thermotoga neapolitana.